A 568-amino-acid chain; its full sequence is Dihydroxy-acid dehydratase (568 aa).

A [2Fe-2S] cluster-binding site is contributed by C59. D91 is a binding site for Mg(2+). C132 is a binding site for [2Fe-2S] cluster. Residues D133 and K134 each contribute to the Mg(2+) site. K134 bears the N6-carboxylysine mark. Residue C204 participates in [2Fe-2S] cluster binding. A Mg(2+)-binding site is contributed by E456. The active-site Proton acceptor is the S482.

It belongs to the IlvD/Edd family. As to quaternary structure, homodimer. Requires [2Fe-2S] cluster as cofactor. The cofactor is Mg(2+).

The enzyme catalyses (2R)-2,3-dihydroxy-3-methylbutanoate = 3-methyl-2-oxobutanoate + H2O. It catalyses the reaction (2R,3R)-2,3-dihydroxy-3-methylpentanoate = (S)-3-methyl-2-oxopentanoate + H2O. Its pathway is amino-acid biosynthesis; L-isoleucine biosynthesis; L-isoleucine from 2-oxobutanoate: step 3/4. It functions in the pathway amino-acid biosynthesis; L-valine biosynthesis; L-valine from pyruvate: step 3/4. Functionally, functions in the biosynthesis of branched-chain amino acids. Catalyzes the dehydration of (2R,3R)-2,3-dihydroxy-3-methylpentanoate (2,3-dihydroxy-3-methylvalerate) into 2-oxo-3-methylpentanoate (2-oxo-3-methylvalerate) and of (2R)-2,3-dihydroxy-3-methylbutanoate (2,3-dihydroxyisovalerate) into 2-oxo-3-methylbutanoate (2-oxoisovalerate), the penultimate precursor to L-isoleucine and L-valine, respectively. This is Dihydroxy-acid dehydratase from Verminephrobacter eiseniae (strain EF01-2).